The sequence spans 294 residues: Shikimate dehydrogenase (NADP(+)) (294 aa).

Residues 23–25 (SRS) and threonine 76 each bind shikimate. The Proton acceptor role is filled by lysine 80. Shikimate is bound by residues asparagine 101 and aspartate 116. NADP(+) is bound by residues 141 to 145 (GAGGA) and methionine 233. A shikimate-binding site is contributed by tyrosine 235. Glycine 256 contributes to the NADP(+) binding site.

The protein belongs to the shikimate dehydrogenase family. As to quaternary structure, homodimer.

It catalyses the reaction shikimate + NADP(+) = 3-dehydroshikimate + NADPH + H(+). The protein operates within metabolic intermediate biosynthesis; chorismate biosynthesis; chorismate from D-erythrose 4-phosphate and phosphoenolpyruvate: step 4/7. In terms of biological role, involved in the biosynthesis of the chorismate, which leads to the biosynthesis of aromatic amino acids. Catalyzes the reversible NADPH linked reduction of 3-dehydroshikimate (DHSA) to yield shikimate (SA). In Methylibium petroleiphilum (strain ATCC BAA-1232 / LMG 22953 / PM1), this protein is Shikimate dehydrogenase (NADP(+)).